The primary structure comprises 292 residues: Acetyl-coenzyme A carboxylase carboxyl transferase subunit beta (292 aa).

The CoA carboxyltransferase N-terminal domain occupies 29 to 292 (LWSKCPECGQ…HGCESRVASS (264 aa)). The Zn(2+) site is built by Cys-33, Cys-36, Cys-52, and Cys-55. A C4-type zinc finger spans residues 33–55 (CPECGQVVYRKDLLSNASVCGNC).

Belongs to the AccD/PCCB family. Acetyl-CoA carboxylase is a heterohexamer composed of biotin carboxyl carrier protein (AccB), biotin carboxylase (AccC) and two subunits each of ACCase subunit alpha (AccA) and ACCase subunit beta (AccD). The cofactor is Zn(2+).

Its subcellular location is the cytoplasm. The catalysed reaction is N(6)-carboxybiotinyl-L-lysyl-[protein] + acetyl-CoA = N(6)-biotinyl-L-lysyl-[protein] + malonyl-CoA. The protein operates within lipid metabolism; malonyl-CoA biosynthesis; malonyl-CoA from acetyl-CoA: step 1/1. Component of the acetyl coenzyme A carboxylase (ACC) complex. Biotin carboxylase (BC) catalyzes the carboxylation of biotin on its carrier protein (BCCP) and then the CO(2) group is transferred by the transcarboxylase to acetyl-CoA to form malonyl-CoA. This is Acetyl-coenzyme A carboxylase carboxyl transferase subunit beta from Synechococcus sp. (strain CC9311).